The sequence spans 932 residues: MTEFLPFVARHIGPRHEDERAMLAALGLPSMETLITQAVPASIRLNRALNLPAALSEADALAELGTIMGRNVVKKSFIGAGYHGVHTPPVIQRNLFENPAWYTAYTPYQSEISQGRLELLFHFQTLVAELTGLPVACASLLDEATAVAEAIGVACRHHRDKRSRILLAGELHPQTVDVVNTRAEPLGWEIATGSDVDDNTAAIVVPWPDTRGVYGDFAKVIADAKAKGALVIAVADPLALTIMEAPARWGADMAVGSMQRYGVPMGFGGPHAAYLAVSEALTRIIPGRIVGQSVDAHGRAAYRLALQTREQHIRRDKATSNICTAQALLANMAAAFAIWHGPAGLQAIATRVAALAARFAAALKAAGVEIAGESLFDTVTAKVPGKAAAIAAEADKGGRLIRIIDADTVGVTFDETSTEEDLTALASLFGAKPVGGDTVLVPGKERGEGFLTQEVFHSHRSETEMMRFLRRLADKDLALDRAMIPLGSCTMKLNAAAEMMPVSWNTVANLHPFAPAEQVQGYAKMTSDLEAWLCEITGFAGVSLQPNAGSQGEYAGLMAIRHYHQAWGQGHRNICLIPSSAHGTNPASASMAGMSVVVVNCRPDGDIDIDDLKAKAEKHRDNLAAFMITYPSTYGVFEEGIKAFCEIVHDNGGQVYFDGANLNALVGLARPADIGADVCHMNLHKTFCIPHGGGGPGVGPIGVAKHLVPYLPGHVEAGSEHAVAAAQFGSASILVITWMYIRMMGGAGLKKATEAAILNANYIAHRLKGVYPILYTGAHDRVAHECIVDTRVLKDSAGITVEDVAKRLIDYGFHAPSMSWPVAGTLMIEPTESEPKLEIDRLCDAMIAIAGEAKKVADGVWPADDNPLANAPHTASDTLATEWKHPYTREEAVFPGGAFDPTAKYWPPVSRVDNVGGDRNLICSCPPVAAYG.

N6-(pyridoxal phosphate)lysine is present on K685.

This sequence belongs to the GcvP family. The glycine cleavage system is composed of four proteins: P, T, L and H. Pyridoxal 5'-phosphate serves as cofactor.

The enzyme catalyses N(6)-[(R)-lipoyl]-L-lysyl-[glycine-cleavage complex H protein] + glycine + H(+) = N(6)-[(R)-S(8)-aminomethyldihydrolipoyl]-L-lysyl-[glycine-cleavage complex H protein] + CO2. The glycine cleavage system catalyzes the degradation of glycine. The P protein binds the alpha-amino group of glycine through its pyridoxal phosphate cofactor; CO(2) is released and the remaining methylamine moiety is then transferred to the lipoamide cofactor of the H protein. The polypeptide is Glycine dehydrogenase (decarboxylating) (Brucella canis (strain ATCC 23365 / NCTC 10854 / RM-666)).